We begin with the raw amino-acid sequence, 238 residues long: Cadherin-2 (238 aa).

3 consecutive Cadherin domains span residues 1–46 (TKPL…RPEF), 47–161 (LHQV…PPEF), and 162–238 (TAMT…RMFV). Topologically, residues 1 to 238 (TKPLDRELIA…IDFETNRMFV (238 aa)) are extracellular. Residues Asp5, Glu7, Asp38, Met39, Asn40, Asp41, and Asn42 each coordinate Ca(2+). A glycan (N-linked (GlcNAc...) asparagine) is linked at Asn52. Ca(2+) contacts are provided by Asp72, Asp74, and Asn80. Asn104 carries N-linked (GlcNAc...) asparagine glycosylation. Position 132 (Asp132) interacts with Ca(2+). Asn181 carries N-linked (GlcNAc...) asparagine glycosylation.

In terms of assembly, homodimer (via extracellular region). Can also form heterodimers with other cadherins (via extracellular region). Dimerization occurs in trans, i.e. with a cadherin chain from another cell. Interacts with CDCP1. Interacts with PCDH8; this complex may also include TAOK2. The interaction with PCDH8 may lead to internalization through TAOK2/p38 MAPK pathway. Identified in a complex containing FGFR4, NCAM1, CDH2, PLCG1, FRS2, SRC, SHC1, GAP43 and CTTN. May interact with OBSCN (via protein kinase domain 2). In terms of processing, cleaved by MMP24. Ectodomain cleavage leads to the generation of a soluble 90 kDa N-terminal soluble fragment and a 45 kDa membrane-bound C-terminal fragment 1 (CTF1), which is further cleaved by gamma-secretase into a 35 kDa. Cleavage in neural stem cells by MMP24 affects CDH2-mediated anchorage of neural stem cells to ependymocytes in the adult subependymal zone, leading to modulate neural stem cell quiescence. Post-translationally, may be phosphorylated by OBSCN.

The protein localises to the cell membrane. It is found in the sarcolemma. The protein resides in the cell junction. Its subcellular location is the cell surface. It localises to the desmosome. The protein localises to the adherens junction. In terms of biological role, calcium-dependent cell adhesion protein; preferentially mediates homotypic cell-cell adhesion by dimerization with a CDH2 chain from another cell. Cadherins may thus contribute to the sorting of heterogeneous cell types. Acts as a regulator of neural stem cells quiescence by mediating anchorage of neural stem cells to ependymocytes in the adult subependymal zone: upon cleavage by MMP24, CDH2-mediated anchorage is affected, leading to modulate neural stem cell quiescence. Plays a role in cell-to-cell junction formation between pancreatic beta cells and neural crest stem (NCS) cells, promoting the formation of processes by NCS cells. Required for proper neurite branching. Required for pre- and postsynaptic organization. CDH2 may be involved in neuronal recognition mechanism. In hippocampal neurons, may regulate dendritic spine density. The chain is Cadherin-2 (CDH2) from Cricetulus griseus (Chinese hamster).